The chain runs to 840 residues: DNA mismatch repair protein MutS (840 aa).

601 to 608 contributes to the ATP binding site; the sequence is GPNMSGKS.

Belongs to the DNA mismatch repair MutS family.

Functionally, this protein is involved in the repair of mismatches in DNA. It is possible that it carries out the mismatch recognition step. This protein has a weak ATPase activity. The sequence is that of DNA mismatch repair protein MutS from Lactococcus lactis subsp. cremoris (strain MG1363).